Consider the following 275-residue polypeptide: Formamidopyrimidine-DNA glycosylase (275 aa).

The active-site Schiff-base intermediate with DNA is P2. The Proton donor role is filled by E3. K59 (proton donor; for beta-elimination activity) is an active-site residue. DNA-binding residues include H92, R111, and K155. The segment at 240–274 (YVYGQTGEPCRRCGHEIEKMKLGGRGTHYCPHCQQ) adopts an FPG-type zinc-finger fold. R264 functions as the Proton donor; for delta-elimination activity in the catalytic mechanism.

The protein belongs to the FPG family. In terms of assembly, monomer. Requires Zn(2+) as cofactor.

It carries out the reaction Hydrolysis of DNA containing ring-opened 7-methylguanine residues, releasing 2,6-diamino-4-hydroxy-5-(N-methyl)formamidopyrimidine.. The catalysed reaction is 2'-deoxyribonucleotide-(2'-deoxyribose 5'-phosphate)-2'-deoxyribonucleotide-DNA = a 3'-end 2'-deoxyribonucleotide-(2,3-dehydro-2,3-deoxyribose 5'-phosphate)-DNA + a 5'-end 5'-phospho-2'-deoxyribonucleoside-DNA + H(+). Involved in base excision repair of DNA damaged by oxidation or by mutagenic agents. Acts as a DNA glycosylase that recognizes and removes damaged bases. Has a preference for oxidized purines, such as 7,8-dihydro-8-oxoguanine (8-oxoG). Has AP (apurinic/apyrimidinic) lyase activity and introduces nicks in the DNA strand. Cleaves the DNA backbone by beta-delta elimination to generate a single-strand break at the site of the removed base with both 3'- and 5'-phosphates. The sequence is that of Formamidopyrimidine-DNA glycosylase from Exiguobacterium sp. (strain ATCC BAA-1283 / AT1b).